Reading from the N-terminus, the 393-residue chain is Formate-dependent phosphoribosylglycinamide formyltransferase (393 aa).

Residues E22–L23 and E82 each bind N(1)-(5-phospho-beta-D-ribosyl)glycinamide. ATP contacts are provided by residues R114, K155, S160–Q165, E195–V198, and E203. Residues L119–L308 form the ATP-grasp domain. Positions 267 and 279 each coordinate Mg(2+). N(1)-(5-phospho-beta-D-ribosyl)glycinamide contacts are provided by residues D286, K355, and R362–R363.

The protein belongs to the PurK/PurT family. Homodimer.

It catalyses the reaction N(1)-(5-phospho-beta-D-ribosyl)glycinamide + formate + ATP = N(2)-formyl-N(1)-(5-phospho-beta-D-ribosyl)glycinamide + ADP + phosphate + H(+). The protein operates within purine metabolism; IMP biosynthesis via de novo pathway; N(2)-formyl-N(1)-(5-phospho-D-ribosyl)glycinamide from N(1)-(5-phospho-D-ribosyl)glycinamide (formate route): step 1/1. Functionally, involved in the de novo purine biosynthesis. Catalyzes the transfer of formate to 5-phospho-ribosyl-glycinamide (GAR), producing 5-phospho-ribosyl-N-formylglycinamide (FGAR). Formate is provided by PurU via hydrolysis of 10-formyl-tetrahydrofolate. The protein is Formate-dependent phosphoribosylglycinamide formyltransferase of Yersinia enterocolitica serotype O:8 / biotype 1B (strain NCTC 13174 / 8081).